Reading from the N-terminus, the 249-residue chain is Oxidoreductase asL5 (249 aa).

Residues isoleucine 21, lysine 45, asparagine 90, tyrosine 155, lysine 159, isoleucine 188, and threonine 190 each contribute to the NADP(+) site. Tyrosine 155 (proton acceptor) is an active-site residue. The Lowers pKa of active site Tyr role is filled by lysine 159.

The protein belongs to the short-chain dehydrogenases/reductases (SDR) family.

Functionally, oxidoreductase; part of the gene cluster that mediates the biosynthesis of xenovulene A, an unusual meroterpenoid that has potent inhibitory effects on the human gamma-aminobutyrate A (GABAA) benzodiazepine receptor. The first step of xenovulene A biosynthesis is the biosynthesis of 3-methylorcinaldehyde performed by the non-reducing polyketide synthase aspks1. The salicylate hydroxylase asL1 then catalyzes the oxidative dearomatization of 3-methylorcinaldehyde to yield a dearomatized hydroxycyclohexadione. The 2-oxoglutarate-dependent dioxygenase asL3 further catalyzes the oxidative ring expansion to provide the first tropolone metabolite. The cytochrome P450 monooxygenase asR2 allows the synthesis of tropolone hemiacetal. In parallel, a previously unrecognised class of terpene cyclase, asR6, produces alpha-humulene from farnesylpyrophosphate (FPP). The putative Diels-Alderase asR5 probably catalyzes the formation of the tropolone-humulene skeleton by linking humulene and the polyketide moiety. Oxidative-ring contractions catalyzed by asL4 and asL6 then processively remove carbon atoms from the polyketide to yield xenovulene A. The chain is Oxidoreductase asL5 from Sarocladium schorii (Acremonium strictum (strain IMI 501407)).